The sequence spans 233 residues: MKIIFFLCSFLFFIINTQCVTHESYQELVKKLEALEDAVLTGYSLFQKEKMVLNEGTSGTAVTTSTPGSKGSVASGGSGGSVASGGSVASGGSGNSRRTNPSDNSSDSDAKSYADLKHRVRNYLLTIKELKYPQLFDLTNHMLTLCDNIHGFKYLIDGYEEINELLYKLNFYFDLLRAKLNDVCANDYCQIPFNLKIRANELDVLKKLVFGYRKPLDNIKDNVGKMEDYIKKK.

A signal peptide spans 1–19; that stretch reads MKIIFFLCSFLFFIINTQC. Positions 58–67 are enriched in polar residues; it reads SGTAVTTSTP. The interval 58 to 110 is disordered; it reads SGTAVTTSTPGSKGSVASGGSGGSVASGGSVASGGSGNSRRTNPSDNSSDSDA. Gly residues predominate over residues 74–94; sequence ASGGSGGSVASGGSVASGGSG. The span at 95–107 shows a compositional bias: polar residues; it reads NSRRTNPSDNSSD. Asn104 carries an N-linked (GlcNAc...) asparagine glycan.

As to quaternary structure, forms a complex composed of subunits p83, p30, p38, and p42 which remain non-covalently associated; the complex is formed at the merozoite surface prior to egress from host erythrocytes. Forms a complex composed of processed MSP1 subunits, MSP6 subunit p36 and MSP7; the complex is formed at the merozoite surface prior to egress from host erythrocytes. Within the complex, interacts (via subunit p38) with MSP6 subunit p36 and (via subunits p83, p30 and p38) with MSP7 (via subunit p22). Forms a complex composed of MSP1, MSP6, DBLMSP1 and DBLMSP2. Within the complex, interacts (via subunit p38) with DBLMSP1 and DBLMSP2. Forms a complex composed of MSP1, and rhoptry proteins RhopH3, RAP1 and CLAG9/RhopH3. Within the complex, interacts (via subunits p42 and p19) with RhopH3 (via C-terminus). Forms a complex composed of MSP1, MSP6, MSP7, MSP9 and MSP3; within the complex, MSP6 and MSP9 mediate the binding to the host erythrocyte. Interacts (via subunits p19 and p42) with MSP9; the interaction is direct; MSP1 subunits p19 or p42, and MSP9 form a co-ligand complex that interacts with host SLC4A1/Band 3 protein. May interact with PFD6. Interacts with host spectrin. In terms of processing, the p190 precursor is cleaved by SUB1 prior to merozoite egress into 4 subunits p83, p30, p38, and p42 which remain non-covalently associated. SUB1-mediated proteolytic cleavage occurs in an orderly manner; the first cleavage occurs at the p83/p30 site, followed by cleavage at the p30/p38 site, the last cleavage occurs at the p38/p42 site. The order of cleavage is essential for parasite viability. SUB1-mediated processing is essential for merozoite egress. In a second processing step during erythrocyte invasion, p42 is cleaved by SUB2 into p33 and p19; the latter remains attached to the merozoite surface via its GPI-anchor and stays on the surface during the subsequent ring stage.

It is found in the cell membrane. The protein localises to the secreted. Its function is as follows. During the asexual blood stage, involved in merozoite egress from host erythrocytes possibly via its interaction with the host cytoskeleton protein spectrin resulting in the destabilization of the host cytoskeleton and thus leading to erythrocyte cell membrane rupture. Involved in the binding to host erythrocytes and is required for host erythrocyte invasion. The protein is Merozoite surface protein 1 of Plasmodium falciparum (isolate CDC / Honduras).